Consider the following 204-residue polypeptide: Matrix-remodeling-associated protein 7 (204 aa).

Residues 7–27 (LLAALPALATALALLLAWLLV) form a helical membrane-spanning segment. Positions 32 to 148 (AASPEPARAP…FSFKYSPGKL (117 aa)) are disordered. The segment covering 38–47 (ARAPPEPAPP) has biased composition (pro residues). Residues 63-103 (EPAASPAGPEEPGEPAGLGELGEPAGPGEPEGPGDPAAAPA) show a composition bias toward low complexity. A compositionally biased stretch (basic and acidic residues) spans 110-126 (VEARQEEEQDLDGEKGP). S191 carries the phosphoserine modification.

It is found in the membrane. This Homo sapiens (Human) protein is Matrix-remodeling-associated protein 7 (MXRA7).